A 341-amino-acid chain; its full sequence is tRNA N6-adenosine threonylcarbamoyltransferase (341 aa).

The Fe cation site is built by histidine 111 and histidine 115. Residues 134–138, aspartate 167, glycine 180, and asparagine 276 each bind substrate; that span reads LVSGG. Position 304 (aspartate 304) interacts with Fe cation.

It belongs to the KAE1 / TsaD family. Requires Fe(2+) as cofactor.

The protein localises to the cytoplasm. It catalyses the reaction L-threonylcarbamoyladenylate + adenosine(37) in tRNA = N(6)-L-threonylcarbamoyladenosine(37) in tRNA + AMP + H(+). Required for the formation of a threonylcarbamoyl group on adenosine at position 37 (t(6)A37) in tRNAs that read codons beginning with adenine. Is involved in the transfer of the threonylcarbamoyl moiety of threonylcarbamoyl-AMP (TC-AMP) to the N6 group of A37, together with TsaE and TsaB. TsaD likely plays a direct catalytic role in this reaction. The sequence is that of tRNA N6-adenosine threonylcarbamoyltransferase from Pseudomonas putida (strain ATCC 700007 / DSM 6899 / JCM 31910 / BCRC 17059 / LMG 24140 / F1).